The chain runs to 184 residues: Ribosome-recycling factor (184 aa).

It belongs to the RRF family.

The protein resides in the cytoplasm. Its function is as follows. Responsible for the release of ribosomes from messenger RNA at the termination of protein biosynthesis. May increase the efficiency of translation by recycling ribosomes from one round of translation to another. This is Ribosome-recycling factor from Clostridium botulinum (strain Loch Maree / Type A3).